We begin with the raw amino-acid sequence, 373 residues long: MSGLHRSSSSSKNIGNCLPSKELLDDLCSRFVLNVPEEDQQSFERILFLVEYAYWYYEDNAVENDPKLKSLSLKEFTSLLFNSCDVLRPYVTHIDDIFKDFTSYKCRVPVTGAIILDETYERCLLVKGWKGSSWSFPRGKKSKDEEDHACAIREVLEETGFDVSKLLKREEYIEFVFRQQRVRLYIVAGVTEDTVFAPLTKKEISEITWHRLDHLQPASNEVITHGVSGLKLYMVAPFLSSLKSWILKHPSPVARRPNKPLKALCVWNARTSVGGNGTATVESQNRKSELRTTTMESNSRKPELKRTTMESHSTKPELRKGTMESHNTTATVESHNTKPVVDHSQDIKPGGSFINFKFNQSVILQALESGNSA.

A Nudix hydrolase domain is found at 106 to 234 (CRVPVTGAII…HGVSGLKLYM (129 aa)). A Nudix box motif is present at residues 139–160 (GKKSKDEEDHACAIREVLEETG). Glu154 and Glu158 together coordinate Mg(2+). 2 residues coordinate ATP: Arg178 and Tyr233. An RNA binding region spans residues 233-250 (YMVAPFLSSLKSWILKHP). The tract at residues 275–342 (GNGTATVESQ…ESHNTKPVVD (68 aa)) is disordered. Residues 298 to 323 (NSRKPELKRTTMESHSTKPELRKGTM) show a composition bias toward basic and acidic residues. Residues 324–334 (ESHNTTATVES) are compositionally biased toward polar residues. The PDZ-binding signature appears at 370 to 373 (GNSA).

It belongs to the Nudix hydrolase family. DCP2 subfamily. Homodimer. Catalytic component of the decapping complex. Interacts with DCP1, DCP5 and VCS. Requires Mn(2+) as cofactor. Mg(2+) is required as a cofactor. In terms of tissue distribution, expressed in seedlings, mostly in root tips, root hairs, and the vascular system. Also present in roots, leaves, stems, and flowers.

Its subcellular location is the cytoplasm. It is found in the P-body. It catalyses the reaction a 5'-end (N(7)-methyl 5'-triphosphoguanosine)-ribonucleoside in mRNA + H2O = N(7)-methyl-GDP + a 5'-end phospho-ribonucleoside in mRNA + 2 H(+). Inhibited by the product 7-methyl GDP. Catalytic component of the decapping complex necessary for the degradation of mRNAs, both in normal mRNA turnover and in nonsense-mediated mRNA decay. Removes the 7-methyl guanine cap structure from mRNA molecules, yielding a 5'-phosphorylated mRNA fragment and 7m-GDP. Essential for postembryonic development, especially during the formation of the shoot apical meristem (SAM). The protein is mRNA-decapping enzyme subunit 2 (DCP2) of Arabidopsis thaliana (Mouse-ear cress).